A 287-amino-acid chain; its full sequence is Nucleotide-binding protein HD_0584 (287 aa).

Position 8-15 (8-15) interacts with ATP; sequence GRSGSGKS. GTP is bound at residue 56 to 59; the sequence is DIRN.

It belongs to the RapZ-like family.

Functionally, displays ATPase and GTPase activities. The protein is Nucleotide-binding protein HD_0584 of Haemophilus ducreyi (strain 35000HP / ATCC 700724).